The following is a 141-amino-acid chain: Large ribosomal subunit protein uL11 (141 aa).

This sequence belongs to the universal ribosomal protein uL11 family. As to quaternary structure, part of the ribosomal stalk of the 50S ribosomal subunit. Interacts with L10 and the large rRNA to form the base of the stalk. L10 forms an elongated spine to which L12 dimers bind in a sequential fashion forming a multimeric L10(L12)X complex. In terms of processing, one or more lysine residues are methylated.

In terms of biological role, forms part of the ribosomal stalk which helps the ribosome interact with GTP-bound translation factors. The protein is Large ribosomal subunit protein uL11 of Streptococcus uberis (strain ATCC BAA-854 / 0140J).